A 319-amino-acid chain; its full sequence is Ribonuclease Z (319 aa).

His62, His64, Asp66, His67, His139, Asp209, and His268 together coordinate Zn(2+). Asp66 serves as the catalytic Proton acceptor.

It belongs to the RNase Z family. Homodimer. Zn(2+) serves as cofactor.

It catalyses the reaction Endonucleolytic cleavage of RNA, removing extra 3' nucleotides from tRNA precursor, generating 3' termini of tRNAs. A 3'-hydroxy group is left at the tRNA terminus and a 5'-phosphoryl group is left at the trailer molecule.. Its function is as follows. Zinc phosphodiesterase, which displays some tRNA 3'-processing endonuclease activity. Probably involved in tRNA maturation, by removing a 3'-trailer from precursor tRNA. This chain is Ribonuclease Z, found in Pseudomonas putida (strain GB-1).